Consider the following 106-residue polypeptide: Immunoglobulin lambda constant 1 (106 aa).

Positions 7–101 (PTVTLFPPSS…EGSTVEKTVA (95 aa)) constitute an Ig-like domain. A disulfide bridge connects residues cysteine 28 and cysteine 87.

In terms of assembly, immunoglobulins are composed of two identical heavy chains and two identical light chains; disulfide-linked.

It is found in the secreted. The protein resides in the cell membrane. Constant region of immunoglobulin light chains. Immunoglobulins, also known as antibodies, are membrane-bound or secreted glycoproteins produced by B lymphocytes. In the recognition phase of humoral immunity, the membrane-bound immunoglobulins serve as receptors which, upon binding of a specific antigen, trigger the clonal expansion and differentiation of B lymphocytes into immunoglobulins-secreting plasma cells. Secreted immunoglobulins mediate the effector phase of humoral immunity, which results in the elimination of bound antigens. The antigen binding site is formed by the variable domain of one heavy chain, together with that of its associated light chain. Thus, each immunoglobulin has two antigen binding sites with remarkable affinity for a particular antigen. The variable domains are assembled by a process called V-(D)-J rearrangement and can then be subjected to somatic hypermutations which, after exposure to antigen and selection, allow affinity maturation for a particular antigen. This is Immunoglobulin lambda constant 1 from Homo sapiens (Human).